Here is a 689-residue protein sequence, read N- to C-terminus: Ataxin-1-like (689 aa).

The span at 1–19 shows a compositional bias: basic and acidic residues; the sequence is MKPVHERSQECLPPKKRDL. Disordered regions lie at residues 1-46, 185-223, and 242-297; these read MKPV…SEWS, ATPP…LDLA, and LHET…GEGQ. Residues 20 to 197 are interaction with NCOR2 and ATXN1; that stretch reads PVTSEDMGRT…PPQAPSPAHS (178 aa). The tract at residues 20–197 is self-association; it reads PVTSEDMGRT…PPQAPSPAHS (178 aa). 2 stretches are compositionally biased toward polar residues: residues 28–43 and 200–219; these read RTTS…SDAS and KAPS…STQP. Positions 257 to 268 are enriched in low complexity; that stretch reads QESQSALEAAAA. Over residues 273–285 the composition is skewed to basic and acidic residues; the sequence is RPRERNLVRRESE. S284 carries the phosphoserine modification. T330 carries the post-translational modification Phosphothreonine. A disordered region spans residues 357-405; the sequence is KEEPSPLNLSHHTPDHQGEGRGSARNPAELAEKSQARGFYPQSHQEPVK. A Phosphoserine modification is found at S361. Positions 457 to 588 constitute an AXH domain; it reads PPPITSSHLP…SISLQSLNSN (132 aa). Residue S615 is modified to Phosphoserine. The interval 617–647 is disordered; that stretch reads ELCDSEGKSQPAGEGSRVVEPSQPESGAQAC.

It belongs to the ATXN1 family. In terms of assembly, homodimer. Interacts with CIC. Interacts (via AXH domain) with NCOR2. Interacts with ATXN1. Directly interacts with RBPJ; this interaction is disrupted in the presence of Notch intracellular domain. Competes with ATXN1 for RBPJ-binding. Found in a complex with CIC and ATXN1. Expressed in cerebellum and cerebral cortex.

The protein resides in the nucleus. It localises to the cell projection. It is found in the dendrite. Its function is as follows. Chromatin-binding factor that repress Notch signaling in the absence of Notch intracellular domain by acting as a CBF1 corepressor. Binds to the HEY promoter and might assist, along with NCOR2, RBPJ-mediated repression. Can suppress ATXN1 cytotoxicity in spinocerebellar ataxia type 1 (SCA1). In concert with CIC and ATXN1, involved in brain development. This Homo sapiens (Human) protein is Ataxin-1-like (ATXN1L).